The primary structure comprises 124 residues: Protein MGF 100-1R (124 aa).

Belongs to the asfivirus MGF 100 family.

Its function is as follows. Plays a role in virus cell tropism, and may be required for efficient virus replication in macrophages. The sequence is that of Protein MGF 100-1R from Ornithodoros (relapsing fever ticks).